The chain runs to 750 residues: MIIRSPEPEVKILVDRDPVKTSFEEWARPGHFSRTIAKGPDTTTWIWNLHADAHDFDSHTSDLEEISRKVFSAHFGQLSIIFLWLSGMYFHGARFSNYEAWLSDPTHIGPSAQVVWPIVGQEILNGDVGGGFRGIQITSGFFQIWRASGITSELQLYCTAIGALVFAALMLFAGWFHYHKAAPKLAWFQDVESMLNHHLAGLLGLGSLSWAGHQVHVSLPINQFLNAGVDPKEIPLPHEFILNRDLLAQLYPSFAEGATPFFTLNWSKYADFLTFRGGLDPVTGGLWLTDIAHHHLAIAILFLIAGHMYRTNWGIGHGLKDILEAHKGPFTGQGHKGLYEILTTSWHAQLSLNLAMLGSLTIVVAHHMYSMPPYPYLATDYGTQLSLFTHHMWIGGFLIVGAAAHAAIFMVRDYDPTTRYNDLLDRVLRHRDAIISHLNWACIFLGFHSFGLYIHNDTMSALGRPQDMFSDTAIQLQPVFAQWIQNTHALAPGATAPGATASTSLTWGGGDLVAVGGKVALLPIPLGTADFLVHHIHAFTIHVTVLILLKGVLFARSSRLIPDKANLGFRFPCDGPGRGGTCQVSAWDHVFLGLFWMYNAISVVIFHFSWKMQSDVWGSVSDQGVVTHITGGNFAQSSITINGWLRDFLWAQASQVIQSYGSSLSAYGLFFLGAHFVWAFSLMFLFSGRGYWQELIESIVWAHNKLKVAPATQPRALSIIQGRAVGVTHYLLGGIATTWAFFLARIIAVG.

8 consecutive transmembrane segments (helical) span residues 70 to 93 (VFSA…FHGA), 156 to 179 (LYCT…FHYH), 195 to 219 (LNHH…HVSL), 291 to 309 (IAHH…GHMY), 346 to 369 (WHAQ…HHMY), 385 to 411 (LSLF…IFMV), 433 to 455 (AIIS…LYIH), and 531 to 549 (FLVH…LILL). Residues Cys-573 and Cys-582 each coordinate [4Fe-4S] cluster. Transmembrane regions (helical) follow at residues 589-610 (HVFL…HFSW) and 664-686 (LSAY…MFLF). Residue His-675 participates in chlorophyll a' binding. 2 residues coordinate chlorophyll a: Met-683 and Tyr-691. Trp-692 lines the phylloquinone pocket. Residues 724–744 (AVGVTHYLLGGIATTWAFFLA) form a helical membrane-spanning segment.

The protein belongs to the PsaA/PsaB family. The PsaA/B heterodimer binds the P700 chlorophyll special pair and subsequent electron acceptors. PSI consists of a core antenna complex that captures photons, and an electron transfer chain that converts photonic excitation into a charge separation. The eukaryotic PSI reaction center is composed of at least 11 subunits. P700 is a chlorophyll a/chlorophyll a' dimer, A0 is one or more chlorophyll a, A1 is one or both phylloquinones and FX is a shared 4Fe-4S iron-sulfur center. is required as a cofactor.

It is found in the plastid. Its subcellular location is the chloroplast thylakoid membrane. The catalysed reaction is reduced [plastocyanin] + hnu + oxidized [2Fe-2S]-[ferredoxin] = oxidized [plastocyanin] + reduced [2Fe-2S]-[ferredoxin]. PsaA and PsaB bind P700, the primary electron donor of photosystem I (PSI), as well as the electron acceptors A0, A1 and FX. PSI is a plastocyanin-ferredoxin oxidoreductase, converting photonic excitation into a charge separation, which transfers an electron from the donor P700 chlorophyll pair to the spectroscopically characterized acceptors A0, A1, FX, FA and FB in turn. Oxidized P700 is reduced on the lumenal side of the thylakoid membrane by plastocyanin. This Nicotiana sylvestris (Wood tobacco) protein is Photosystem I P700 chlorophyll a apoprotein A1.